We begin with the raw amino-acid sequence, 1016 residues long: Coiled-coil domain-containing protein 57 (1016 aa).

Residues 1–503 (MLPLCSEREL…HGLLPGQEAQ (503 aa)) form a centrosomal targeting domain region. Coiled coils occupy residues 14–607 (LARK…PVKT), 676–700 (SEVDQVHLEVLELQKQVAELRKHLK), and 748–775 (VTHLQRKLKDAARKILSLRLEREQLLEM). Disordered stretches follow at residues 500–519 (QEAQVPPQQHEGEIRADSPS) and 549–573 (HLPPAQPEECSNADPDPKAGGDSTP). A microtubule binding domain region spans residues 604–1016 (PVKTSVATAD…SRIRNYNLKD (413 aa)). Disordered stretches follow at residues 781 to 921 (AEQG…LASS) and 933 to 1016 (GSSP…NLKD). 2 stretches are compositionally biased toward polar residues: residues 846-859 (QPHSAQVGSKTNTP) and 934-945 (SSPSGVPSQDNS).

In terms of assembly, interacts with CEP63; the interaction is required for their location to proximal end of centrioles. Interacts with microtubules.

It localises to the cytoplasm. The protein resides in the cytoskeleton. It is found in the microtubule organizing center. The protein localises to the centrosome. Its subcellular location is the centriolar satellite. It localises to the centriole. The protein resides in the spindle. Functionally, pleiotropic regulator of centriole duplication, mitosis, and ciliogenesis. Critical interface between centrosome and microtubule-mediated cellular processes. Centriole duplication protein required for recruitment of CEP63, CEP152, and PLK4 to the centrosome. Independent of its centrosomal targeting, localizes to and interacts with microtubules and regulates microtubule nucleation, stability, and mitotic progression. The chain is Coiled-coil domain-containing protein 57 from Mus musculus (Mouse).